The sequence spans 143 residues: Large ribosomal subunit protein uL15 (143 aa).

Residues 20–52 are disordered; it reads GRGIGSGKGKTAGRGHKGQHSRAGGYHKVGFEG. Residues 30 to 39 are compositionally biased toward basic residues; sequence TAGRGHKGQH.

It belongs to the universal ribosomal protein uL15 family. Part of the 50S ribosomal subunit.

Binds to the 23S rRNA. In Coxiella burnetii (strain CbuK_Q154) (Coxiella burnetii (strain Q154)), this protein is Large ribosomal subunit protein uL15.